We begin with the raw amino-acid sequence, 145 residues long: Maximins 3/H11 type 3 (145 aa).

The signal sequence occupies residues 1-18 (MNFKYIVAVSFLIASAYA). 2 consecutive propeptides follow at residues 19–43 (RSVQNDEQSLSQRDVLEEEESLREI) and 75–122 (TAEE…TKKE). Position 144 is an isoleucine amide (isoleucine 144).

Belongs to the bombinin family. Expressed by the skin glands.

Its subcellular location is the secreted. Its function is as follows. Maximin-3 shows antibacterial activity against both Gram-positive and Gram-negative bacteria. It also shows antimicrobial activity against the fungus C.albicans, but not against A.flavus nor P.uticale. It has little hemolytic activity. It possess a significant cytotoxicity against tumor cell lines. It possess a significant anti-HIV activity. It shows high spermicidal activity. Maximin-H11 shows antimicrobial activity against bacteria and against the fungus C.albicans. Shows strong hemolytic activity. The protein is Maximins 3/H11 type 3 of Bombina maxima (Giant fire-bellied toad).